A 364-amino-acid polypeptide reads, in one-letter code: Uroporphyrinogen decarboxylase (364 aa).

Substrate contacts are provided by residues 49-53 (RQAGR), D98, Y173, S228, and H341.

This sequence belongs to the uroporphyrinogen decarboxylase family. Homodimer.

Its subcellular location is the cytoplasm. It catalyses the reaction uroporphyrinogen III + 4 H(+) = coproporphyrinogen III + 4 CO2. It functions in the pathway porphyrin-containing compound metabolism; protoporphyrin-IX biosynthesis; coproporphyrinogen-III from 5-aminolevulinate: step 4/4. Functionally, catalyzes the decarboxylation of four acetate groups of uroporphyrinogen-III to yield coproporphyrinogen-III. The chain is Uroporphyrinogen decarboxylase from Protochlamydia amoebophila (strain UWE25).